A 137-amino-acid polypeptide reads, in one-letter code: Small ribosomal subunit protein uS11 (137 aa).

Positions 1–11 are enriched in polar residues; the sequence is MPPKSRSTGPK. Disordered stretches follow at residues 1–28 and 117–137; these read MPPKSRSTGPKKTQKARRRDKKNVPHGA and TISDVTPQPHNGCRPPKRRRV. A compositionally biased stretch (basic residues) spans 12-21; the sequence is KTQKARRRDK.

The protein belongs to the universal ribosomal protein uS11 family. Part of the 30S ribosomal subunit. Interacts with proteins S7 and S18. Binds to IF-3.

Its function is as follows. Located on the platform of the 30S subunit, it bridges several disparate RNA helices of the 16S rRNA. Forms part of the Shine-Dalgarno cleft in the 70S ribosome. The sequence is that of Small ribosomal subunit protein uS11 from Rhodococcus opacus (strain B4).